Here is a 549-residue protein sequence, read N- to C-terminus: Probable protein kinase UbiB (549 aa).

One can recognise a Protein kinase domain in the interval 123-504; that stretch reads DFDETALASA…QRNNTGFSRL (382 aa). Residues 129–137 and Lys156 contribute to the ATP site; that span reads LASASIAQV. The active-site Proton acceptor is Asp291. A helical membrane pass occupies residues 505–525; the sequence is MILGIAIAGTFWKFEMLPLWV.

The protein belongs to the ABC1 family. UbiB subfamily.

Its subcellular location is the cell inner membrane. Its pathway is cofactor biosynthesis; ubiquinone biosynthesis [regulation]. Functionally, is probably a protein kinase regulator of UbiI activity which is involved in aerobic coenzyme Q (ubiquinone) biosynthesis. This Glaesserella parasuis serovar 5 (strain SH0165) (Haemophilus parasuis) protein is Probable protein kinase UbiB.